The primary structure comprises 312 residues: Putative HTH-type transcriptional regulatory protein Ta1363 (312 aa).

An HTH cro/C1-type domain is found at 133 to 186 (LREMRMKMSLSIGYLSHYLGVSRRSVSLYENGSSATIDVFLKLQEIIKSDLVDH). Residues 144-163 (IGYLSHYLGVSRRSVSLYEN) constitute a DNA-binding region (H-T-H motif).

In Thermoplasma acidophilum (strain ATCC 25905 / DSM 1728 / JCM 9062 / NBRC 15155 / AMRC-C165), this protein is Putative HTH-type transcriptional regulatory protein Ta1363.